The following is a 935-amino-acid chain: Coiled-coil domain-containing protein 191 (935 aa).

Coiled-coil stretches lie at residues 189 to 324 (RLTM…ENQQ), 366 to 438 (YTRS…ALLK), 554 to 589 (RHVFQQQLIEKQKKKLQEQQKTILELKKNQRLAEAQ), and 660 to 740 (KAME…LEAI). Disordered regions lie at residues 596–661 (SAVT…ILKA) and 678–715 (EKKKKQEEEKLAQLKAQEEERQKREAEEKEAQLERKRE).

The protein is Coiled-coil domain-containing protein 191 (CCDC191) of Macaca fascicularis (Crab-eating macaque).